Here is a 345-residue protein sequence, read N- to C-terminus: High mobility group protein 20A (345 aa).

Disordered stretches follow at residues 1–130 (MEST…PFPE) and 166–206 (QKYQ…EKES). Polar residues-rich tracts occupy residues 22-38 (NNQP…SSQA) and 57-67 (LHQSGEQQLGN). Basic residues predominate over residues 80–94 (ARRGGWNKGRKRKRS). A DNA-binding region (HMG box) is located at residues 101 to 169 (PKAPLTGYVR…RYTKELQKYQ (69 aa)). A compositionally biased stretch (basic and acidic residues) spans 112–125 (MNERREQLRTERPD). A compositionally biased stretch (polar residues) spans 167–178 (KYQNTDAYQTYS). The span at 179-189 (RKAKSRQKGRQ) shows a compositional bias: basic residues. Residues 227–285 (SKAREAELRQLRKSNMEFEERNAALQKHVESMRSAVQRLEAELSQEHERNSLLQQHLQS) adopt a coiled-coil conformation.

Its subcellular location is the nucleus. In terms of biological role, plays a role in neuronal differentiation. The chain is High mobility group protein 20A (hmg20a) from Xenopus laevis (African clawed frog).